The chain runs to 655 residues: p-hydroxybenzoic acid efflux pump subunit AaeB (655 aa).

A run of 11 helical transmembrane segments spans residues 13-33, 38-58, 69-89, 93-113, 121-141, 152-172, 370-390, 407-427, 431-451, 455-475, and 482-502; these read FAVK…HFQL, WAVL…GGEP, LRII…IAMI, LLMI…SSLV, WGLA…EPLL, EIVI…PRSI, LFWL…IAVV, FIYG…VIIP, QSML…GIEV, LLGS…DNPM, and FLDS…VILL.

This sequence belongs to the aromatic acid exporter ArAE (TC 2.A.85) family.

Its subcellular location is the cell inner membrane. In terms of biological role, forms an efflux pump with AaeA. Could function as a metabolic relief valve, allowing to eliminate certain compounds when they accumulate to high levels in the cell. The protein is p-hydroxybenzoic acid efflux pump subunit AaeB of Shigella boydii serotype 4 (strain Sb227).